Reading from the N-terminus, the 1026-residue chain is Multidrug resistance protein MdtC (1026 aa).

The next 11 helical transmembrane spans lie at 15 to 35 (ILIA…LPVA), 333 to 353 (EVEE…FLFL), 360 to 380 (LIPA…MYLC), 387 to 407 (LSLM…IVVL), 431 to 451 (VGFT…PLLL), 463 to 483 (FAVT…TLTP), 528 to 548 (LVGV…IAIP), 853 to 873 (LILI…LYES), 897 to 917 (LFNA…IGIV), 953 to 973 (PIMM…LSGG), and 984 to 1004 (ITIV…TPVV).

This sequence belongs to the resistance-nodulation-cell division (RND) (TC 2.A.6) family. MdtC subfamily. Part of a tripartite efflux system composed of MdtA, MdtB and MdtC. MdtC forms a heteromultimer with MdtB.

Its subcellular location is the cell inner membrane. The protein is Multidrug resistance protein MdtC of Salmonella schwarzengrund (strain CVM19633).